We begin with the raw amino-acid sequence, 551 residues long: MPLRPGDASSSASTASNRSRTRTRYRTKAMNSEVDESLFGGVKPSSQGKSDSPIVVIHDKHAIRKTLSALGLEHKTETIQLITRDMVRELIVPTEDPSGESLIISPEEFERIKWASQVLTKEELNAREQALKKEKEGILEAVTIRKKIMKQKEMTWNNNKKLSDLEEVARERAQNLLQRADKLRMEQEEELKDMSKIILNAKCHAIRDAQILEKQQIQKELDEEERRLDHMMEIDRRESLQRQEDRERKRREERVRGKRHIVEQIKKNEEERSLQAEHREQEKEQMLAYLDRLQEEDLQDLERRHQEKLKMQAEIKRINDENQRQKAEMLAQERLADQMVMEFTKKKMAREAEYEAEQEKIRREKEKEIARLRALQEKAQDYQAEQDALRAKRNQEVADREWRRKEKENAQKKIETEEKLRKSRLEQVAFKEHTLAVQVQRDRDEFERILRAQREQIEREKQEQEKKAKGCLQHANELRRQVRENQQKHVQNRLATFEEGRRLKEEAEKRRERIEDIKKQKLEELRATGLPEKYCIEVERKANILPATSVN.

3 disordered regions span residues methionine 1–serine 52, methionine 232–arginine 256, and glutamate 385–glutamate 415. A compositionally biased stretch (low complexity) spans alanine 8–arginine 18. The stretch at alanine 276–glutamate 524 forms a coiled coil. The segment covering aspartate 387–glutamate 415 has biased composition (basic and acidic residues).

This sequence belongs to the CFAP45 family. As to quaternary structure, microtubule inner protein component of sperm flagellar doublet microtubules. Interacts with AK8; dimerization with AK8 may create a cavity at the interface of the dimer that can accommodate AMP. Interacts with CFAP52. Interacts with ENKUR. Directly interacts with DNALI1. Interacts with DNAH11. Interacts with DNAI1. Expressed in respiratory cells and in sperm (at protein level).

It localises to the cytoplasm. The protein resides in the cytoskeleton. The protein localises to the cilium axoneme. Its subcellular location is the flagellum axoneme. It is found in the cell projection. It localises to the cilium. The protein resides in the flagellum. Microtubule inner protein (MIP) part of the dynein-decorated doublet microtubules (DMTs) in cilia axoneme, which is required for motile cilia beating. It is an AMP-binding protein that may facilitate dynein ATPase-dependent ciliary and flagellar beating via adenine nucleotide homeostasis. May function as a donor of AMP to AK8 and hence promote ADP production. This is Cilia- and flagella-associated protein 45 (Cfap45) from Mus musculus (Mouse).